A 209-amino-acid polypeptide reads, in one-letter code: MAKDFRDITLALAGICQASRLVQQIAYQGNADEKDVEVMVNSIFNINPTSTLDVYSNQISHLKLGFQTIKAIHQAVRREKLTFELMTYQQGLINLERIINKNNDYSSHLSQKISQLERQKNYFEPLSDGLFNALAGVYSDAVSPVGPKIQVNGSIELLKNPIIQAKVRGLLLTGLRSAVLWRQVGGRRFDFLLHQKTILRQTDDFLAQC.

This sequence belongs to the HflD family.

Its subcellular location is the cytoplasm. The protein resides in the cell inner membrane. The protein is High frequency lysogenization protein HflD homolog of Proteus mirabilis (strain HI4320).